Here is a 426-residue protein sequence, read N- to C-terminus: Adenylosuccinate synthetase 2 (426 aa).

GTP is bound by residues 12 to 18 and 40 to 42; these read GDEGKGK and GHT. The Proton acceptor role is filled by Asp-13. Asp-13 and Gly-40 together coordinate Mg(2+). IMP-binding positions include 13–16, 38–41, Arg-147, Asn-223, Thr-238, and Arg-302; these read DEGK and NAGH. His-41 (proton donor) is an active-site residue. 298–304 contributes to the substrate binding site; the sequence is TNTGRRR. Residues Arg-304, 330–332, and 412–414 each bind GTP; these read KLD and GVG.

It belongs to the adenylosuccinate synthetase family. Homodimer. Mg(2+) serves as cofactor.

It localises to the cytoplasm. The catalysed reaction is IMP + L-aspartate + GTP = N(6)-(1,2-dicarboxyethyl)-AMP + GDP + phosphate + 2 H(+). The protein operates within purine metabolism; AMP biosynthesis via de novo pathway; AMP from IMP: step 1/2. Its function is as follows. Plays an important role in the de novo pathway and in the salvage pathway of purine nucleotide biosynthesis. Catalyzes the first committed step in the biosynthesis of AMP from IMP. The chain is Adenylosuccinate synthetase 2 from Laccaria bicolor (strain S238N-H82 / ATCC MYA-4686) (Bicoloured deceiver).